A 1144-amino-acid chain; its full sequence is Type II inositol polyphosphate 5-phosphatase 14 (1144 aa).

Disordered stretches follow at residues 15-67 and 81-118; these read ASLV…FDSS and GRTS…DDIE. 5 WD repeats span residues 158-196, 216-255, 269-307, 445-483, and 524-561; these read ETQT…EVGC, VPTS…TTTA, AHRG…KSLV, EDTR…LREV, and SHNE…PLDS. Catalytic stretches follow at residues 791 to 807 and 870 to 885; these read DLVA…FGIT and KKRI…YRDN. Residue Lys949 forms a Glycyl lysine isopeptide (Lys-Gly) (interchain with G-Cter in ubiquitin) linkage. Residues 1111 to 1131 show a composition bias toward polar residues; the sequence is TTMTKNLEGSTRYQTDANRGG. The tract at residues 1111–1144 is disordered; that stretch reads TTMTKNLEGSTRYQTDANRGGSTRHRTDDSTRRG. Residues 1135–1144 show a composition bias toward basic and acidic residues; it reads HRTDDSTRRG.

It belongs to the inositol polyphosphate 5-phosphatase family. Requires Mg(2+) as cofactor. Expressed in young seedlings and flowers.

The catalysed reaction is a 1,2-diacyl-sn-glycero-3-phospho-(1D-myo-inositol-4,5-bisphosphate) + H2O = a 1,2-diacyl-sn-glycero-3-phospho-(1D-myo-inositol 4-phosphate) + phosphate. It carries out the reaction a 1,2-diacyl-sn-glycero-3-phospho-(1D-myo-inositol-3,4,5-trisphosphate) + H2O = a 1,2-diacyl-sn-glycero-3-phospho-(1D-myo-inositol-3,4-bisphosphate) + phosphate. It catalyses the reaction 1D-myo-inositol 1,4,5-trisphosphate + H2O = 1D-myo-inositol 1,4-bisphosphate + phosphate. Its function is as follows. Has phosphatase activity toward PtdIns(4,5)P2, PtdIns(3,4,5)P3 and Ins(1,4,5)P3. The chain is Type II inositol polyphosphate 5-phosphatase 14 from Arabidopsis thaliana (Mouse-ear cress).